We begin with the raw amino-acid sequence, 499 residues long: Probable folate-biopterin transporter 2 (499 aa).

Transmembrane regions (helical) follow at residues 43–63, 92–112, 116–136, 141–161, 185–205, 209–229, 266–286, 302–322, 330–350, 354–374, 399–419, and 435–455; these read WSFVFGVVSLYGINQGLGGSL, IPWIIKPLWGILTDVLPIFGF, PYFILAGVLGVVSLLFISLHS, YLALFWMTISSAAMAIADVTI, LSSSIGALLGFFMSGILVHLV, GVFGLLTFPFALVSVVGIVFS, LYMYISLTLGLNIHEGLFYWF, FILSIGSIGSILAATLYQLVL, LCLWTQLLFALSGMLDLILVF, LKFGLPDYLFIVVDEIVSQMI, FALLMSIDNAGLMTSSWLGGI, and WLAVLVRNVMRLLPLCFLFLV.

This sequence belongs to the major facilitator superfamily. Folate-biopterin transporter (TC 2.A.71) family.

The protein localises to the membrane. Its function is as follows. Could mediate folate transport. The protein is Probable folate-biopterin transporter 2 of Arabidopsis thaliana (Mouse-ear cress).